Reading from the N-terminus, the 334-residue chain is tRNA uridine(34) hydroxylase (334 aa).

In terms of domain architecture, Rhodanese spans serine 123–serine 217. The active-site Cysteine persulfide intermediate is cysteine 177.

Belongs to the TrhO family.

It carries out the reaction uridine(34) in tRNA + AH2 + O2 = 5-hydroxyuridine(34) in tRNA + A + H2O. Catalyzes oxygen-dependent 5-hydroxyuridine (ho5U) modification at position 34 in tRNAs. In Shewanella putrefaciens (strain CN-32 / ATCC BAA-453), this protein is tRNA uridine(34) hydroxylase.